A 259-amino-acid polypeptide reads, in one-letter code: Gem-associated protein 2 (259 aa).

This sequence belongs to the gemin-2 family. In terms of assembly, forms a stable heteromeric complex with survival of motor neuron protein (SMN), GEMIN3 and GEMIN4. The SMN complex is associated with the spliceosomal snRNAs U1 and U5 in the cytoplasm of oocytes.

The protein resides in the nucleus. It localises to the gem. Its subcellular location is the cytoplasm. Its function is as follows. The SMN complex catalyzes the assembly of small nuclear ribonucleoproteins (snRNPs), the building blocks of the spliceosome, and thereby plays an important role in the splicing of cellular pre-mRNAs. Most spliceosomal snRNPs contain a common set of Sm proteins SNRPB, SNRPD1, SNRPD2, SNRPD3, SNRPE, SNRPF and SNRPG that assemble in a heptameric protein ring on the Sm site of the small nuclear RNA to form the core snRNP (Sm core). In the cytosol, the Sm proteins SNRPD1, SNRPD2, SNRPE, SNRPF and SNRPG (5Sm) are trapped in an inactive 6S pICln-Sm complex by the chaperone CLNS1A that controls the assembly of the core snRNP. To assemble core snRNPs, the SMN complex accepts the trapped 5Sm proteins from CLNS1A. Binding of snRNA inside 5Sm ultimately triggers eviction of the SMN complex, thereby allowing binding of SNRPD3 and SNRPB to complete assembly of the core snRNP. Within the SMN complex, GEMIN2 constrains the conformation of 5Sm, thereby promoting 5Sm binding to snRNA containing the snRNP code (a nonameric Sm site and a 3'-adjacent stem-loop), thus preventing progression of assembly until a cognate substrate is bound. This Xenopus laevis (African clawed frog) protein is Gem-associated protein 2 (gemin2).